The sequence spans 569 residues: S-(+)-linalool synthase, chloroplastic (569 aa).

Residues 1-39 (MALIATKISSRSCFVSAYPNNSPTFLISKFPNTVDSLSP) constitute a chloroplast transit peptide. Arg-294, Asp-331, Asp-335, Arg-472, and Asp-475 together coordinate (2E)-geranyl diphosphate. Mg(2+)-binding residues include Asp-331 and Asp-335. The DDXXD motif motif lies at 331-335 (DDIFD). Mg(2+) contacts are provided by Asp-475, Ser-479, and Glu-483.

Belongs to the terpene synthase family. Tpsb subfamily. Requires Mg(2+) as cofactor. It depends on Mn(2+) as a cofactor. Predominantly expressed in flowers but also in stems and siliques.

It localises to the plastid. It is found in the chloroplast. The enzyme catalyses (2E)-geranyl diphosphate + H2O = (S)-linalool + diphosphate. It participates in secondary metabolite biosynthesis; terpenoid biosynthesis. In terms of biological role, involved in monoterpene (C10) biosynthesis. The major product is (S)-linalool. The polypeptide is S-(+)-linalool synthase, chloroplastic (Arabidopsis thaliana (Mouse-ear cress)).